A 297-amino-acid polypeptide reads, in one-letter code: Probable GTP 3',8-cyclase (297 aa).

Residues 4–227 enclose the Radical SAM core domain; it reads RYGRQIRSFR…MQNRKKYVID (224 aa). Arginine 13 serves as a coordination point for GTP. Residues cysteine 20 and cysteine 24 each contribute to the [4Fe-4S] cluster site. Position 26 (tyrosine 26) interacts with S-adenosyl-L-methionine. Cysteine 27 is a binding site for [4Fe-4S] cluster. Lysine 61 is a GTP binding site. Glycine 65 provides a ligand contact to S-adenosyl-L-methionine. Threonine 91 contributes to the GTP binding site. Serine 115 contacts S-adenosyl-L-methionine. A GTP-binding site is contributed by lysine 152. [4Fe-4S] cluster contacts are provided by cysteine 243 and cysteine 246. 248 to 250 contacts GTP; the sequence is RIR. Cysteine 260 is a [4Fe-4S] cluster binding site.

Belongs to the radical SAM superfamily. MoaA family. It depends on [4Fe-4S] cluster as a cofactor.

It carries out the reaction GTP + AH2 + S-adenosyl-L-methionine = (8S)-3',8-cyclo-7,8-dihydroguanosine 5'-triphosphate + 5'-deoxyadenosine + L-methionine + A + H(+). It functions in the pathway cofactor biosynthesis; molybdopterin biosynthesis. In terms of biological role, catalyzes the cyclization of GTP to (8S)-3',8-cyclo-7,8-dihydroguanosine 5'-triphosphate. The chain is Probable GTP 3',8-cyclase from Methanococcus maripaludis (strain DSM 14266 / JCM 13030 / NBRC 101832 / S2 / LL).